The sequence spans 272 residues: Shikimate dehydrogenase (NADP(+)) (272 aa).

Shikimate is bound by residues 14 to 16 (SKS) and T61. The Proton acceptor role is filled by K65. Residue E77 coordinates NADP(+). Positions 86 and 102 each coordinate shikimate. NADP(+) is bound by residues 126-130 (GAGGA), 149-154 (NRTVSR), and M213. Position 215 (Y215) interacts with shikimate. Residue G237 coordinates NADP(+).

It belongs to the shikimate dehydrogenase family. In terms of assembly, homodimer.

The catalysed reaction is shikimate + NADP(+) = 3-dehydroshikimate + NADPH + H(+). It functions in the pathway metabolic intermediate biosynthesis; chorismate biosynthesis; chorismate from D-erythrose 4-phosphate and phosphoenolpyruvate: step 4/7. Involved in the biosynthesis of the chorismate, which leads to the biosynthesis of aromatic amino acids. Catalyzes the reversible NADPH linked reduction of 3-dehydroshikimate (DHSA) to yield shikimate (SA). In Shigella flexneri serotype 5b (strain 8401), this protein is Shikimate dehydrogenase (NADP(+)).